Reading from the N-terminus, the 313-residue chain is Ribosomal protein L11 methyltransferase (313 aa).

Positions 164, 185, 207, and 249 each coordinate S-adenosyl-L-methionine.

It belongs to the methyltransferase superfamily. PrmA family.

It is found in the cytoplasm. The catalysed reaction is L-lysyl-[protein] + 3 S-adenosyl-L-methionine = N(6),N(6),N(6)-trimethyl-L-lysyl-[protein] + 3 S-adenosyl-L-homocysteine + 3 H(+). Methylates ribosomal protein L11. This is Ribosomal protein L11 methyltransferase from Clostridium perfringens (strain 13 / Type A).